The following is a 148-amino-acid chain: Putative adenylate kinase (148 aa).

5 residues coordinate ATP: Gly9, Gly11, Lys12, Ser13, and Thr14. The NMP stretch occupies residues 28-44 (EGNALAVKYGCLSGDEV). The segment at 91–101 (DRGYSPEKIDE) is LID. Residue Arg92 coordinates ATP.

This sequence belongs to the adenylate kinase family. AK6 subfamily. As to quaternary structure, interacts with uS11. Not a structural component of 40S pre-ribosomes, but transiently interacts with them by binding to uS11.

It catalyses the reaction AMP + ATP = 2 ADP. The catalysed reaction is ATP + H2O = ADP + phosphate + H(+). In terms of biological role, broad-specificity nucleoside monophosphate (NMP) kinase that catalyzes the reversible transfer of the terminal phosphate group between nucleoside triphosphates and monophosphates. Also has ATPase activity. Involved in the late maturation steps of the 30S ribosomal particles, specifically 16S rRNA maturation. While NMP activity is not required for ribosome maturation, ATPase activity is. Associates transiently with small ribosomal subunit protein uS11. ATP hydrolysis breaks the interaction with uS11. May temporarily remove uS11 from the ribosome to enable a conformational change of the ribosomal RNA that is needed for the final maturation step of the small ribosomal subunit. This Thermoplasma acidophilum (strain ATCC 25905 / DSM 1728 / JCM 9062 / NBRC 15155 / AMRC-C165) protein is Putative adenylate kinase.